Reading from the N-terminus, the 410-residue chain is MANDLFNSFMTGPDENGRFGDFGGRFVSETLMPLILELEEQYENAKTDESFWAEMNDLWTHYVGRPSPLYFAERLTDHLGGAKVYMKRDELNHTGAHKINNVLGQIILARRMGKTRIIAETGAGQHGVATATVCAKFGLKCVVYMGAHDVERQAPNVFRMRLLGAEVVPVTSGRGTLKDAMNDALRDWVTNVRDTFYCIGTVAGPHPYPAMVRDFQAIIGKEVRTQMTAAEGRFPDTVIAAIGGGSNAMGLFYPFLDDKEVGIIGVEAGGKGVNAKMEHCASLTGGRPGVLHGNRTYLLQDDDGQILEGFSISAGLDYPGIGPEHAWLHDIGRAQYVSITDVEALEAFQLCCELEGIIPALEPSHALAHVMKIAPDLPSDHIICMNMCGRGDKDIFTVAKALGFEMGEFA.

Position 98 is an N6-(pyridoxal phosphate)lysine (lysine 98).

This sequence belongs to the TrpB family. Tetramer of two alpha and two beta chains. Pyridoxal 5'-phosphate serves as cofactor.

It carries out the reaction (1S,2R)-1-C-(indol-3-yl)glycerol 3-phosphate + L-serine = D-glyceraldehyde 3-phosphate + L-tryptophan + H2O. The protein operates within amino-acid biosynthesis; L-tryptophan biosynthesis; L-tryptophan from chorismate: step 5/5. The beta subunit is responsible for the synthesis of L-tryptophan from indole and L-serine. The chain is Tryptophan synthase beta chain from Roseobacter denitrificans (strain ATCC 33942 / OCh 114) (Erythrobacter sp. (strain OCh 114)).